Consider the following 967-residue polypeptide: Leucine--tRNA ligase (967 aa).

The 'HIGH' region motif lies at 43 to 53 (PYLSGHLHVGH). Positions 650–654 (KMSKS) match the 'KMSKS' region motif. Position 653 (Lys-653) interacts with ATP.

This sequence belongs to the class-I aminoacyl-tRNA synthetase family.

Its subcellular location is the cytoplasm. The enzyme catalyses tRNA(Leu) + L-leucine + ATP = L-leucyl-tRNA(Leu) + AMP + diphosphate. This chain is Leucine--tRNA ligase, found in Pyrococcus horikoshii (strain ATCC 700860 / DSM 12428 / JCM 9974 / NBRC 100139 / OT-3).